Here is a 135-residue protein sequence, read N- to C-terminus: Large ribosomal subunit protein uL16c (135 aa).

This sequence belongs to the universal ribosomal protein uL16 family. Part of the 50S ribosomal subunit.

Its subcellular location is the plastid. It is found in the chloroplast. The sequence is that of Large ribosomal subunit protein uL16c from Acorus calamus var. americanus (American sweet flag).